The primary structure comprises 256 residues: UPF0246 protein Swoo_1284 (256 aa).

Belongs to the UPF0246 family.

The chain is UPF0246 protein Swoo_1284 from Shewanella woodyi (strain ATCC 51908 / MS32).